The chain runs to 691 residues: Penicillin-binding protein 2D (691 aa).

Residues 1 to 19 lie on the Cytoplasmic side of the membrane; the sequence is MDAMTNKRLRLTLKTVRAF. Residues 20 to 40 traverse the membrane as a helical; Signal-anchor for type II membrane protein segment; it reads IFLGAFAALAAAAVFMTVILI. Residues 41–691 are Extracellular-facing; the sequence is AKYQGAPSVQ…WWDKWLGRHH (651 aa). The tract at residues 55–223 is transglycosylase; it reads TILYASDGSK…PSGYSPYVNE (169 aa). Catalysis depends on E94, which acts as the Proton donor; for transglycosylase activity. The tract at residues 327–605 is transpeptidase; it reads VGFSAIDPRT…AKTIWADFME (279 aa). The active-site Acyl-ester intermediate; for transpeptidase activity is the S365. Residues 663 to 691 are disordered; that stretch reads AKQTKDRLPSKEKPASEKKWWDKWLGRHH. Basic and acidic residues predominate over residues 664–691; it reads KQTKDRLPSKEKPASEKKWWDKWLGRHH.

It in the N-terminal section; belongs to the glycosyltransferase 51 family. The protein in the C-terminal section; belongs to the transpeptidase family.

It is found in the cell membrane. The catalysed reaction is [GlcNAc-(1-&gt;4)-Mur2Ac(oyl-L-Ala-gamma-D-Glu-L-Lys-D-Ala-D-Ala)](n)-di-trans,octa-cis-undecaprenyl diphosphate + beta-D-GlcNAc-(1-&gt;4)-Mur2Ac(oyl-L-Ala-gamma-D-Glu-L-Lys-D-Ala-D-Ala)-di-trans,octa-cis-undecaprenyl diphosphate = [GlcNAc-(1-&gt;4)-Mur2Ac(oyl-L-Ala-gamma-D-Glu-L-Lys-D-Ala-D-Ala)](n+1)-di-trans,octa-cis-undecaprenyl diphosphate + di-trans,octa-cis-undecaprenyl diphosphate + H(+). It carries out the reaction Preferential cleavage: (Ac)2-L-Lys-D-Ala-|-D-Ala. Also transpeptidation of peptidyl-alanyl moieties that are N-acyl substituents of D-alanine.. The protein operates within cell wall biogenesis; peptidoglycan biosynthesis. Involved in the polymerization and cross-linking of spore peptidoglycan. May be required for synthesis of the spore germ cell wall, the first layer of peptidoglycan synthesized on the surface of the inner forespore membrane. This chain is Penicillin-binding protein 2D (pbpG), found in Bacillus subtilis (strain 168).